A 218-amino-acid polypeptide reads, in one-letter code: uncharacterized protein (218 aa).

A signal peptide spans 1–17 (MLKKIIILFLGIFLLSS). Residue Cys-18 is the site of N-palmitoyl cysteine attachment. Cys-18 is lipidated: S-diacylglycerol cysteine. Residues 136 to 164 (YKEKKIEEELNQIKAMLKETKRDITKYTC) are a coiled coil.

Its subcellular location is the cell membrane. This is an uncharacterized protein from Rickettsia typhi (strain ATCC VR-144 / Wilmington).